The primary structure comprises 102 residues: Large ribosomal subunit protein uL24 (102 aa).

Belongs to the universal ribosomal protein uL24 family. In terms of assembly, part of the 50S ribosomal subunit.

One of two assembly initiator proteins, it binds directly to the 5'-end of the 23S rRNA, where it nucleates assembly of the 50S subunit. Functionally, one of the proteins that surrounds the polypeptide exit tunnel on the outside of the subunit. In Alcanivorax borkumensis (strain ATCC 700651 / DSM 11573 / NCIMB 13689 / SK2), this protein is Large ribosomal subunit protein uL24.